A 141-amino-acid chain; its full sequence is Large ribosomal subunit protein uL16 (141 aa).

This sequence belongs to the universal ribosomal protein uL16 family. In terms of assembly, part of the 50S ribosomal subunit.

Functionally, binds 23S rRNA and is also seen to make contacts with the A and possibly P site tRNAs. The sequence is that of Large ribosomal subunit protein uL16 from Geobacillus kaustophilus (strain HTA426).